The following is a 213-amino-acid chain: dTTP/UTP pyrophosphatase (213 aa).

Asp-92 functions as the Proton acceptor in the catalytic mechanism.

The protein belongs to the Maf family. YhdE subfamily. A divalent metal cation serves as cofactor.

The protein resides in the cytoplasm. It catalyses the reaction dTTP + H2O = dTMP + diphosphate + H(+). The catalysed reaction is UTP + H2O = UMP + diphosphate + H(+). In terms of biological role, nucleoside triphosphate pyrophosphatase that hydrolyzes dTTP and UTP. May have a dual role in cell division arrest and in preventing the incorporation of modified nucleotides into cellular nucleic acids. The protein is dTTP/UTP pyrophosphatase of Granulibacter bethesdensis (strain ATCC BAA-1260 / CGDNIH1).